The following is a 423-amino-acid chain: Chitinase 1 (423 aa).

A signal peptide spans 1-22; it reads MLSFVKKSIALVAALQAVTALA. Residues 23–34 constitute a propeptide that is removed on maturation; that stretch reads TPISSEAGVEKR. The region spanning 38-401 is the GH18 domain; it reads FANAVYFTNW…STSHQGLGSQ (364 aa). Chitin-binding positions include 102-103 and 129-132; these read GT and GGWT. The active-site Proton donor is Glu-171. Residues Tyr-172, 237–240, and Trp-378 contribute to the chitin site; that span reads MAYD.

It belongs to the glycosyl hydrolase 18 family. Chitinase class V subfamily.

It localises to the secreted. The catalysed reaction is Random endo-hydrolysis of N-acetyl-beta-D-glucosaminide (1-&gt;4)-beta-linkages in chitin and chitodextrins.. This is Chitinase 1 (CHI1) from Aphanocladium album (Wheat rust fungus).